The primary structure comprises 152 residues: MAKRMQVILNQKVSKLGENGDVVEVAPGYARNYLIPQGVAVLATKGAIKQAEFRKEKERQRLLAEKQEAETRKTAIEKLSPYSIPKQVGENEAIFGTVTSQDVATVILENAKLEIDRRGITVPDIGQLGVYKVQVKLHPEVSADIEIKVIAQ.

The protein belongs to the bacterial ribosomal protein bL9 family.

Its function is as follows. Binds to the 23S rRNA. The sequence is that of Large ribosomal subunit protein bL9 from Microcystis aeruginosa (strain NIES-843 / IAM M-2473).